The chain runs to 839 residues: DNA gyrase subunit A (839 aa).

The Topo IIA-type catalytic domain maps to Leu46–Leu510. Catalysis depends on Tyr134, which acts as the O-(5'-phospho-DNA)-tyrosine intermediate. Residues Gln537 to Gly543 carry the GyrA-box motif.

This sequence belongs to the type II topoisomerase GyrA/ParC subunit family. Heterotetramer, composed of two GyrA and two GyrB chains. In the heterotetramer, GyrA contains the active site tyrosine that forms a transient covalent intermediate with DNA, while GyrB binds cofactors and catalyzes ATP hydrolysis.

It is found in the cytoplasm. The catalysed reaction is ATP-dependent breakage, passage and rejoining of double-stranded DNA.. A type II topoisomerase that negatively supercoils closed circular double-stranded (ds) DNA in an ATP-dependent manner to modulate DNA topology and maintain chromosomes in an underwound state. Negative supercoiling favors strand separation, and DNA replication, transcription, recombination and repair, all of which involve strand separation. Also able to catalyze the interconversion of other topological isomers of dsDNA rings, including catenanes and knotted rings. Type II topoisomerases break and join 2 DNA strands simultaneously in an ATP-dependent manner. The chain is DNA gyrase subunit A from Mycoplasma pneumoniae (strain ATCC 29342 / M129 / Subtype 1) (Mycoplasmoides pneumoniae).